Consider the following 401-residue polypeptide: Argininosuccinate synthase (401 aa).

9–17 (AYSGGLDTS) contacts ATP. Tyr-86 is a binding site for L-citrulline. Gly-116 lines the ATP pocket. Thr-118, Asn-122, and Asp-123 together coordinate L-aspartate. Asn-122 serves as a coordination point for L-citrulline. L-citrulline-binding residues include Arg-126, Ser-174, Ser-183, Glu-259, and Tyr-271.

Belongs to the argininosuccinate synthase family. Type 1 subfamily. In terms of assembly, homotetramer.

The protein resides in the cytoplasm. It catalyses the reaction L-citrulline + L-aspartate + ATP = 2-(N(omega)-L-arginino)succinate + AMP + diphosphate + H(+). It participates in amino-acid biosynthesis; L-arginine biosynthesis; L-arginine from L-ornithine and carbamoyl phosphate: step 2/3. This Bacillus cereus (strain AH820) protein is Argininosuccinate synthase.